The chain runs to 258 residues: uncharacterized protein (258 aa).

Positions 1 to 20 (MKCFQKLYIFILILIVLMAG) are cleaved as a signal peptide. C21 is lipidated: N-palmitoyl cysteine. C21 carries the S-diacylglycerol cysteine lipid modification.

It belongs to the staphylococcal tandem lipoprotein family.

Its subcellular location is the cell membrane. This is an uncharacterized protein from Staphylococcus aureus (strain bovine RF122 / ET3-1).